The sequence spans 102 residues: Co-chaperonin GroES (102 aa).

It belongs to the GroES chaperonin family. Heptamer of 7 subunits arranged in a ring. Interacts with the chaperonin GroEL.

It localises to the cytoplasm. Functionally, together with the chaperonin GroEL, plays an essential role in assisting protein folding. The GroEL-GroES system forms a nano-cage that allows encapsulation of the non-native substrate proteins and provides a physical environment optimized to promote and accelerate protein folding. GroES binds to the apical surface of the GroEL ring, thereby capping the opening of the GroEL channel. The chain is Co-chaperonin GroES from Chlamydia caviae (strain ATCC VR-813 / DSM 19441 / 03DC25 / GPIC) (Chlamydophila caviae).